Consider the following 367-residue polypeptide: Glutamate 5-kinase (367 aa).

Residue Lys-8 coordinates ATP. The substrate site is built by Ser-49, Asp-136, and Asn-148. ATP is bound by residues 168–169 (TD) and 210–216 (TGGMATK). Residues 275–353 (TGKLYLDRGA…EEIPTILGYS (79 aa)) enclose the PUA domain.

Belongs to the glutamate 5-kinase family.

It localises to the cytoplasm. The enzyme catalyses L-glutamate + ATP = L-glutamyl 5-phosphate + ADP. It functions in the pathway amino-acid biosynthesis; L-proline biosynthesis; L-glutamate 5-semialdehyde from L-glutamate: step 1/2. Catalyzes the transfer of a phosphate group to glutamate to form L-glutamate 5-phosphate. The protein is Glutamate 5-kinase of Cyanothece sp. (strain PCC 7425 / ATCC 29141).